A 276-amino-acid chain; its full sequence is Large ribosomal subunit protein uL2 (276 aa).

Disordered stretches follow at residues 34–55 (LQPL…RHQG) and 221–276 (RGSV…RRTK). The segment covering 37 to 48 (LKNNAGRNNNGR) has biased composition (polar residues).

This sequence belongs to the universal ribosomal protein uL2 family. In terms of assembly, part of the 50S ribosomal subunit. Forms a bridge to the 30S subunit in the 70S ribosome.

Its function is as follows. One of the primary rRNA binding proteins. Required for association of the 30S and 50S subunits to form the 70S ribosome, for tRNA binding and peptide bond formation. It has been suggested to have peptidyltransferase activity; this is somewhat controversial. Makes several contacts with the 16S rRNA in the 70S ribosome. The polypeptide is Large ribosomal subunit protein uL2 (Enterococcus faecalis (strain ATCC 700802 / V583)).